The following is a 1120-amino-acid chain: Probable leucine-rich repeat receptor-like protein kinase At1g35710 (1120 aa).

The first 29 residues, 1 to 29 (MGFAEKNLYDFRFLLFISIILSCSISASA), serve as a signal peptide directing secretion. At 30–783 (TIAEANALLK…RELKKPKKNG (754 aa)) the chain is on the extracellular side. Residues Asn-46, Asn-60, Asn-83, and Asn-124 are each glycosylated (N-linked (GlcNAc...) asparagine). LRR repeat units follow at residues 78–100 (SIEE…PFIS), 103–125 (NLAY…FGNL), 127–150 (KLIY…GNLK), 151–172 (NLTV…ELGN), 175–198 (SMTD…GNLK), 199–221 (NLMV…LGNM), 223–246 (SMTD…GNLK), 247–269 (NLMV…IGNM), 271–294 (SMTN…GNLK), 295–317 (NLTL…LGNI), 319–342 (SMID…GNLK), 343–365 (NLTI…LGNM), 367–389 (SMID…FGNL), 391–412 (NLTY…ELGN), 415–437 (SMIN…FGNF), 439–461 (KLES…VANS), 463–484 (HLTT…TVCK), 487–510 (KLQN…RDCK), 535–557 (DLNF…WEKS), 559–581 (KLGA…IWNM), 583–605 (QLVE…IGNL), 607–630 (NLSR…SFLT), 631–652 (NLES…TFDS), 655–677 (KLHD…SKLT), 678–701 (QLTQ…SSLQ), 702–723 (SLDK…TFEG), and 726–748 (ALTN…PTFR). Asn-151 carries an N-linked (GlcNAc...) asparagine glycan. Asn-295 carries N-linked (GlcNAc...) asparagine glycosylation. Asn-343 carries an N-linked (GlcNAc...) asparagine glycan. N-linked (GlcNAc...) asparagine glycans are attached at residues Asn-391, Asn-436, Asn-460, Asn-473, and Asn-490. N-linked (GlcNAc...) asparagine glycosylation is found at Asn-569, Asn-580, Asn-604, Asn-607, Asn-641, and Asn-660. Asn-712 carries N-linked (GlcNAc...) asparagine glycosylation. The chain crosses the membrane as a helical span at residues 784 to 804 (NLVVWILVPILGVLVILSICA). The Cytoplasmic segment spans residues 805 to 1120 (NTFTYCIRKR…TMLSISTTFS (316 aa)). Residue Thr-848 is modified to Phosphothreonine. Positions 851-1120 (FDPTHLIGTG…TMLSISTTFS (270 aa)) constitute a Protein kinase domain. Residues 857–865 (IGTGGYSKV) and Lys-878 contribute to the ATP site. Residues Tyr-929 and Tyr-968 each carry the phosphotyrosine modification. Asp-981 serves as the catalytic Proton acceptor. At Ser-1014 the chain carries Phosphoserine. Phosphotyrosine is present on residues Tyr-1022 and Tyr-1029. Phosphothreonine is present on Thr-1030.

Belongs to the protein kinase superfamily. Ser/Thr protein kinase family.

The protein resides in the membrane. It carries out the reaction L-seryl-[protein] + ATP = O-phospho-L-seryl-[protein] + ADP + H(+). The catalysed reaction is L-threonyl-[protein] + ATP = O-phospho-L-threonyl-[protein] + ADP + H(+). The chain is Probable leucine-rich repeat receptor-like protein kinase At1g35710 from Arabidopsis thaliana (Mouse-ear cress).